The following is a 340-amino-acid chain: NADH-quinone oxidoreductase subunit H (340 aa).

8 consecutive transmembrane segments (helical) span residues 4 to 24 (TIGI…PLLI), 78 to 98 (YLFV…WAVI), 113 to 133 (VLYL…AGWA), 151 to 171 (VSYE…AGSM), 184 to 204 (MLHW…ISGI), 244 to 264 (SMIL…LSPF), 273 to 293 (IFFI…FLFV), and 316 to 336 (VLIP…VAHV).

Belongs to the complex I subunit 1 family. In terms of assembly, NDH-1 is composed of 14 different subunits. Subunits NuoA, H, J, K, L, M, N constitute the membrane sector of the complex.

It is found in the cell inner membrane. It carries out the reaction a quinone + NADH + 5 H(+)(in) = a quinol + NAD(+) + 4 H(+)(out). Its function is as follows. NDH-1 shuttles electrons from NADH, via FMN and iron-sulfur (Fe-S) centers, to quinones in the respiratory chain. The immediate electron acceptor for the enzyme in this species is believed to be ubiquinone. Couples the redox reaction to proton translocation (for every two electrons transferred, four hydrogen ions are translocated across the cytoplasmic membrane), and thus conserves the redox energy in a proton gradient. This subunit may bind ubiquinone. This chain is NADH-quinone oxidoreductase subunit H, found in Legionella pneumophila (strain Lens).